A 357-amino-acid polypeptide reads, in one-letter code: RNA 3'-terminal phosphate cyclase (357 aa).

Residues Q102 and 293–296 contribute to the ATP site; that span reads HMGD. H319 acts as the Tele-AMP-histidine intermediate in catalysis.

The protein belongs to the RNA 3'-terminal cyclase family. Type 1 subfamily.

It is found in the cytoplasm. The enzyme catalyses a 3'-end 3'-phospho-ribonucleotide-RNA + ATP = a 3'-end 2',3'-cyclophospho-ribonucleotide-RNA + AMP + diphosphate. Functionally, catalyzes the conversion of 3'-phosphate to a 2',3'-cyclic phosphodiester at the end of RNA. The mechanism of action of the enzyme occurs in 3 steps: (A) adenylation of the enzyme by ATP; (B) transfer of adenylate to an RNA-N3'P to produce RNA-N3'PP5'A; (C) and attack of the adjacent 2'-hydroxyl on the 3'-phosphorus in the diester linkage to produce the cyclic end product. The biological role of this enzyme is unknown but it is likely to function in some aspects of cellular RNA processing. This is RNA 3'-terminal phosphate cyclase from Staphylothermus marinus (strain ATCC 43588 / DSM 3639 / JCM 9404 / F1).